A 260-amino-acid chain; its full sequence is Glutathione S-transferase domain-containing protein DDB_G0280881 (260 aa).

Residues 7–96 (KVDFIFYTNG…YLAQKYNTFL (90 aa)) form the GST N-terminal domain. The GST C-terminal domain occupies 102–228 (NPKENSDVIT…QQISEGFKNF (127 aa)).

This sequence belongs to the GST superfamily.

The sequence is that of Glutathione S-transferase domain-containing protein DDB_G0280881 from Dictyostelium discoideum (Social amoeba).